Here is a 394-residue protein sequence, read N- to C-terminus: Arogenate dehydratase 2 (394 aa).

The tract at residues 1–24 (MAATTTLRSPKIPHPPPESTPSNL) is disordered. A chloroplast-targeting transit peptide spans 1-47 (MAATTTLRSPKIPHPPPESTPSNLSYLSQISLTPVPKRRRFISIYAC). In terms of domain architecture, Prephenate dehydratase spans 108–283 (RVAYQGVRGA…NVTRFLMLAR (176 aa)). Positions 297 to 388 (SVVFSLDEGP…TFLRVLGSYP (92 aa)) constitute an ACT domain.

Expressed at low levels in petals (corollas and tubes), stems, leaves, pistils, stamens, ovaries and sepals.

It is found in the plastid. It localises to the chloroplast stroma. It carries out the reaction prephenate + H(+) = 3-phenylpyruvate + CO2 + H2O. It catalyses the reaction L-arogenate + H(+) = L-phenylalanine + CO2 + H2O. The protein operates within amino-acid biosynthesis; L-phenylalanine biosynthesis; L-phenylalanine from L-arogenate: step 1/1. Functionally, converts the prephenate and L-arogenate produced from the shikimate-chorismate pathway into 3-phenylpyruvate and phenylalanine (Phe), respectively. Involved in floral volatile benzenoids and phenylpropanoids (FVBP) production. The protein is Arogenate dehydratase 2 of Petunia hybrida (Petunia).